Reading from the N-terminus, the 95-residue chain is uncharacterized protein (95 aa).

Residues 1-21 (MKVLSISLIFFALLLTGCSQV) form the signal peptide.

This is an uncharacterized protein from Archaeoglobus fulgidus (strain ATCC 49558 / DSM 4304 / JCM 9628 / NBRC 100126 / VC-16).